The sequence spans 380 residues: Chaperone protein DnaJ (380 aa).

Residues 6–71 (DYYESLEVSR…QKRAAYDRYG (66 aa)) enclose the J domain. Residues 136–215 (GVTKDVEVRT…CHGTGTEAKT (80 aa)) form a CR-type zinc finger. Residues Cys-149, Cys-152, Cys-167, Cys-170, Cys-189, Cys-192, Cys-203, and Cys-206 each contribute to the Zn(2+) site. CXXCXGXG motif repeat units follow at residues 149–156 (CEACHGSG), 167–174 (CPTCHGAG), 189–196 (CPTCHGSG), and 203–210 (CKVCHGTG).

This sequence belongs to the DnaJ family. In terms of assembly, homodimer. It depends on Zn(2+) as a cofactor.

It localises to the cytoplasm. Its function is as follows. Participates actively in the response to hyperosmotic and heat shock by preventing the aggregation of stress-denatured proteins and by disaggregating proteins, also in an autonomous, DnaK-independent fashion. Unfolded proteins bind initially to DnaJ; upon interaction with the DnaJ-bound protein, DnaK hydrolyzes its bound ATP, resulting in the formation of a stable complex. GrpE releases ADP from DnaK; ATP binding to DnaK triggers the release of the substrate protein, thus completing the reaction cycle. Several rounds of ATP-dependent interactions between DnaJ, DnaK and GrpE are required for fully efficient folding. Also involved, together with DnaK and GrpE, in the DNA replication of plasmids through activation of initiation proteins. In Gluconobacter oxydans (strain 621H) (Gluconobacter suboxydans), this protein is Chaperone protein DnaJ.